The following is a 96-amino-acid chain: MGRSVKKGPFTDTHLEAKLMVLNAASEKKVVRTWSRRSTILPEFVGHTIAVHNGKKFIPVYVTENMVGHKLGEFSPTRTFKGHSVKAATEKSSKPS.

This sequence belongs to the universal ribosomal protein uS19 family.

In terms of biological role, protein S19 forms a complex with S13 that binds strongly to the 16S ribosomal RNA. In Solibacter usitatus (strain Ellin6076), this protein is Small ribosomal subunit protein uS19.